The chain runs to 635 residues: Glycosyltransferase-like protein gnt13 (635 aa).

Residues 1–18 lie on the Cytoplasmic side of the membrane; sequence MNINTLIINFNKVKRMKN. The chain crosses the membrane as a helical; Signal-anchor for type II membrane protein span at residues 19–38; sequence FLILTLLVVMVVVFLQGPTL. The Extracellular portion of the chain corresponds to 39 to 635; that stretch reads MINNSGQGMG…PNECFSDHHW (597 aa). 2 N-linked (GlcNAc...) asparagine glycosylation sites follow: N41 and N179. Disordered regions lie at residues 300–358 and 389–458; these read NINN…NNID and NIDN…NNEP. The segment covering 389–456 has biased composition (low complexity); that stretch reads NIDNNNSNYN…NNNNNNNNNN (68 aa). Residues N393 and N535 are each glycosylated (N-linked (GlcNAc...) asparagine).

The protein belongs to the glycosyltransferase 8 family. Highly divergent.

Its subcellular location is the membrane. The polypeptide is Glycosyltransferase-like protein gnt13 (gnt13) (Dictyostelium discoideum (Social amoeba)).